The following is a 335-amino-acid chain: Pyridoxal 5'-phosphate synthase subunit PdxS (335 aa).

Asp-30 lines the D-ribose 5-phosphate pocket. Lys-87 functions as the Schiff-base intermediate with D-ribose 5-phosphate in the catalytic mechanism. Position 159 (Gly-159) interacts with D-ribose 5-phosphate. Arg-171 is a binding site for D-glyceraldehyde 3-phosphate. D-ribose 5-phosphate is bound by residues Gly-257 and 278 to 279 (GS).

The protein belongs to the PdxS/SNZ family. As to quaternary structure, in the presence of PdxT, forms a dodecamer of heterodimers.

The catalysed reaction is aldehydo-D-ribose 5-phosphate + D-glyceraldehyde 3-phosphate + L-glutamine = pyridoxal 5'-phosphate + L-glutamate + phosphate + 3 H2O + H(+). The protein operates within cofactor biosynthesis; pyridoxal 5'-phosphate biosynthesis. Its function is as follows. Catalyzes the formation of pyridoxal 5'-phosphate from ribose 5-phosphate (RBP), glyceraldehyde 3-phosphate (G3P) and ammonia. The ammonia is provided by the PdxT subunit. Can also use ribulose 5-phosphate and dihydroxyacetone phosphate as substrates, resulting from enzyme-catalyzed isomerization of RBP and G3P, respectively. The chain is Pyridoxal 5'-phosphate synthase subunit PdxS from Thermococcus onnurineus (strain NA1).